A 400-amino-acid chain; its full sequence is Nicotinate phosphoribosyltransferase (400 aa).

Histidine 220 bears the Phosphohistidine; by autocatalysis mark.

The protein belongs to the NAPRTase family. Transiently phosphorylated on a His residue during the reaction cycle. Phosphorylation strongly increases the affinity for substrates and increases the rate of nicotinate D-ribonucleotide production. Dephosphorylation regenerates the low-affinity form of the enzyme, leading to product release.

It catalyses the reaction nicotinate + 5-phospho-alpha-D-ribose 1-diphosphate + ATP + H2O = nicotinate beta-D-ribonucleotide + ADP + phosphate + diphosphate. The protein operates within cofactor biosynthesis; NAD(+) biosynthesis; nicotinate D-ribonucleotide from nicotinate: step 1/1. Functionally, catalyzes the synthesis of beta-nicotinate D-ribonucleotide from nicotinate and 5-phospho-D-ribose 1-phosphate at the expense of ATP. This Cronobacter sakazakii (strain ATCC BAA-894) (Enterobacter sakazakii) protein is Nicotinate phosphoribosyltransferase.